Reading from the N-terminus, the 334-residue chain is Galactinol synthase 4 (334 aa).

The active site involves Lys104. Residues Asp120, Asp122, and His258 each coordinate Mn(2+).

This sequence belongs to the glycosyltransferase 8 family. Galactosyltransferase subfamily. A divalent metal cation is required as a cofactor.

It localises to the cytoplasm. It carries out the reaction myo-inositol + UDP-alpha-D-galactose = alpha-D-galactosyl-(1-&gt;3)-1D-myo-inositol + UDP + H(+). Its function is as follows. Galactinol synthase involved in the biosynthesis of raffinose family oligosaccharides (RFOs) that function as osmoprotectants. May promote plant stress tolerance. This is Galactinol synthase 4 (GOLS4) from Arabidopsis thaliana (Mouse-ear cress).